Consider the following 1109-residue polypeptide: Ankyrin repeat- and BTB/POZ domain-containing protein 3 (1109 aa).

A helical transmembrane segment spans residues 168-188 (IVLSWGLAAHCTAAALAALSL). Residues 260 to 302 (SCSGPGPGSSSGSGPGPGSGPGAPAADKERETPGGGAASGGPC) form a disordered region. Gly residues predominate over residues 264–280 (PGPGSSSGSGPGPGSGP). 5 ANK repeats span residues 608 to 637 (QGMT…DLNV), 654 to 683 (RHWT…KVEG), 692 to 721 (YSET…DPLI), 735 to 764 (GDMN…KEKS), and 830 to 859 (TWLE…TIQE). In terms of domain architecture, BTB spans 928–994 (SDVTFLVEGR…LYYGGPESLL (67 aa)).

The protein resides in the membrane. The polypeptide is Ankyrin repeat- and BTB/POZ domain-containing protein 3 (Abtb3) (Mus musculus (Mouse)).